The sequence spans 281 residues: N-methyltransferase tcpN (281 aa).

This sequence belongs to the methyltransferase superfamily. LaeA methyltransferase family.

The protein operates within secondary metabolite biosynthesis. Functionally, N-methyltransferase; part of the gene cluster that mediates the biosynthesis of an unusual class of epipolythiodioxopiperazines (ETPs) lacking the reactive thiol group important for toxicity. Firstly, L-tyrosine is prenylated by tcpD, before undergoing condensation with L-glycine in a reaction catalyzed by the NRPS tcpP leading to the diketopiperazine (DKP) backbone. Afterwards the alpha-carbon of tyrosine is oxidized by the cytochrome P450 tcpC to form a hydroxyl group. However, in contrast other ETP biosynthesis pathways studied so far, tcpC is not able to bishydroxylate the DKP at both alpha-carbon positions, but hydroxylates the alpha-carbon of the tyrosine part and the nitrogen of the glycine part. The next steps involve an alpha,beta-elimination reaction catalyzed by tcpI, a methylation by the methyltransferase tcpN the action of the four enzyme cascade tcpG/K/J/I. Due to a dysfunctional cytochrome P450 monooxygenase tcpC, the pathway leads to the biosynthesis of probable non-toxic metabolites lacking the reactive thiol group. This chain is N-methyltransferase tcpN, found in Claviceps purpurea (strain 20.1) (Ergot fungus).